Here is a 134-residue protein sequence, read N- to C-terminus: Large ribosomal subunit protein uL16c (134 aa).

Residues 1–22 are disordered; that stretch reads MLSPKRTRFRKQHRGRMKGISH.

The protein belongs to the universal ribosomal protein uL16 family. As to quaternary structure, part of the 50S ribosomal subunit.

Its subcellular location is the plastid. The protein localises to the chloroplast. The chain is Large ribosomal subunit protein uL16c from Nicotiana tomentosiformis (Tobacco).